The sequence spans 320 residues: Eukaryotic translation initiation factor 3 subunit G (320 aa).

Positions 1-60 (MPTGDFDSKPSWADQVEEEGEDDKCVTSELLKGIPLPTGDTSPEPELLPGDPLPPPKEVI) are disordered. Phosphoserine is present on residues serine 8 and serine 11. Threonine 38 and threonine 41 each carry phosphothreonine. A phosphoserine mark is found at serine 42, serine 189, serine 223, and serine 264. Positions 204–233 (QAAQSKTGKYVPPSLRDGASRRGESMQPNR) are disordered. Residues 221-233 (GASRRGESMQPNR) are compositionally biased toward basic and acidic residues. The 79-residue stretch at 239–317 (ATIRVTNLSE…LILNVEWAKP (79 aa)) folds into the RRM domain.

This sequence belongs to the eIF-3 subunit G family. Component of the eukaryotic translation initiation factor 3 (eIF-3) complex, which is composed of 13 subunits: EIF3A, EIF3B, EIF3C, EIF3D, EIF3E, EIF3F, EIF3G, EIF3H, EIF3I, EIF3J, EIF3K, EIF3L and EIF3M. The eIF-3 complex appears to include 3 stable modules: module A is composed of EIF3A, EIF3B, EIF3G and EIF3I; module B is composed of EIF3F, EIF3H, and EIF3M; and module C is composed of EIF3C, EIF3D, EIF3E, EIF3K and EIF3L. EIF3C of module C binds EIF3B of module A and EIF3H of module B, thereby linking the three modules. EIF3J is a labile subunit that binds to the eIF-3 complex via EIF3B. The eIF-3 complex may interact with RPS6KB1 under conditions of nutrient depletion. Mitogenic stimulation may lead to binding and activation of a complex composed of MTOR and RPTOR, leading to phosphorylation and release of RPS6KB1 and binding of EIF4B to eIF-3. Interacts (via C-terminus) with AIFM1 (via N-terminus). Interacts with DHX33; the interaction is independent of RNA. Post-translationally, phosphorylated. Phosphorylation is enhanced upon serum stimulation.

The protein resides in the cytoplasm. The protein localises to the nucleus. Its subcellular location is the perinuclear region. RNA-binding component of the eukaryotic translation initiation factor 3 (eIF-3) complex, which is required for several steps in the initiation of protein synthesis. The eIF-3 complex associates with the 40S ribosome and facilitates the recruitment of eIF-1, eIF-1A, eIF-2:GTP:methionyl-tRNAi and eIF-5 to form the 43S pre-initiation complex (43S PIC). The eIF-3 complex stimulates mRNA recruitment to the 43S PIC and scanning of the mRNA for AUG recognition. The eIF-3 complex is also required for disassembly and recycling of post-termination ribosomal complexes and subsequently prevents premature joining of the 40S and 60S ribosomal subunits prior to initiation. The eIF-3 complex specifically targets and initiates translation of a subset of mRNAs involved in cell proliferation, including cell cycling, differentiation and apoptosis, and uses different modes of RNA stem-loop binding to exert either translational activation or repression. This subunit can bind 18S rRNA. The protein is Eukaryotic translation initiation factor 3 subunit G (Eif3g) of Mus musculus (Mouse).